Here is a 189-residue protein sequence, read N- to C-terminus: Selenoprotein S (189 aa).

A helical membrane pass occupies residues 28–48 (SLLATYGWYIVFSCILLYVVF). The VCP/p97-interacting motif (VIM) stretch occupies residues 78–90 (RQEALAAARLKMQ). A disordered region spans residues 115 to 189 (KIEMWDSMQE…RRGPSSGGUG (75 aa)). Serine 140 carries the post-translational modification Phosphoserine. Positions 159–173 (RGGGYNPLSGEGGGA) are enriched in gly residues. Position 188 (selenocysteine 188) is a non-standard amino acid, selenocysteine.

This sequence belongs to the selenoprotein S family. Interacts with DERL1 and (via VIM motif) with VCP, suggesting that it forms a membrane complex with DERL1 that serves as a receptor for VCP. Also interacts with DERL2, DERL3 and SELENOK. The SELENOK-SELENOS complex interacts with VCP. Interacts with CCDC47. Post-translationally, truncated SELENOS proteins produced by failed UGA/Sec decoding are ubiquitinated by the CRL2(KLHDC2) and CRL2(KLHDC3) complexes, which recognizes the glycine (Gly) at the C-terminus of truncated SELENOS proteins. Truncated SELENOS proteins produced by failed UGA/Sec decoding are also ubiquitinated by the CRL5(KLHDC1) complex.

Its subcellular location is the endoplasmic reticulum membrane. The protein localises to the cytoplasm. Functionally, involved in the degradation process of misfolded endoplasmic reticulum (ER) luminal proteins. Participates in the transfer of misfolded proteins from the ER to the cytosol, where they are destroyed by the proteasome in a ubiquitin-dependent manner. Probably acts by serving as a linker between DERL1, which mediates the retrotranslocation of misfolded proteins into the cytosol, and the ATPase complex VCP, which mediates the translocation and ubiquitination. In Homo sapiens (Human), this protein is Selenoprotein S.